The sequence spans 597 residues: MERPAPLAVLPFSDPAHALSLLRGLSQLRAERKFLDVTLEAAGGRDFPAHRAVLAAASPYFRAMFAGQLRESRAERVRLHGVPPDMLQLLLDFSYTGRVAVSGDNAEPLLRAADLLQFPAVKEACGAFLQQQLDLANCLDMQDFAEAFSCSGLASAAQRFILRHVGELGAEQLERLPLARLLRYLRDDGLCVPKEEAAYQLALRWVRADPPRRAAHWPQLLEAVRLPFVRRFYLLAHVEAEPLVARCPPCLRLLREARDFQAARYDRHDRGPCPRMRPRPSTGLAEILVLVGGCDQDCDELVTVDCYNPQTGQWRYLAEFPDHLGGGYSIVALGNDIYVTGGSDGSRLYDCVWRYNSSVNEWAEVAPMLKAREYHSSSVLDGLLYVVAADSTERYDHTTDSWEALQPMTYPMDNCSTTACRGRLYAIGSLAGKETMVMQCYDPDTDLWSLVDCGQLPPWSFAPKTATLNGLMYFVRDDSAEVDVYNPTRNEWDKIPSMNQVHVGGSLAVLGGKLYVSGGYDNTFELSDVVEAYDPETRAWSVVGRLPEPTFWHGSVSIFRQFMPQTFSGGRGFELDSGSDDMDPGRPRPPRDPDELH.

A BTB domain is found at 35–103 (LDVTLEAAGG…SYTGRVAVSG (69 aa)). One can recognise a BACK domain in the interval 138 to 239 (CLDMQDFAEA…RRFYLLAHVE (102 aa)). Kelch repeat units lie at residues 287–335 (ILVL…ALGN), 336–382 (DIYV…VLDG), 384–422 (LYVV…ACRG), 423–470 (RLYA…TLNG), 472–512 (MYFV…VLGG), and 513–560 (KLYV…SIFR). The tract at residues 570–597 (GRGFELDSGSDDMDPGRPRPPRDPDELH) is disordered. A compositionally biased stretch (basic and acidic residues) spans 583–597 (DPGRPRPPRDPDELH).

Component of the BCR(KLHL21) E3 ubiquitin ligase complex, at least composed of CUL3, KLHL21 and RBX1.

Its subcellular location is the cytoplasm. The protein resides in the cytoskeleton. The protein localises to the spindle. It functions in the pathway protein modification; protein ubiquitination. Functionally, substrate-specific adapter of a BCR (BTB-CUL3-RBX1) E3 ubiquitin-protein ligase complex required for efficient chromosome alignment and cytokinesis. The BCR(KLHL21) E3 ubiquitin ligase complex regulates localization of the chromosomal passenger complex (CPC) from chromosomes to the spindle midzone in anaphase and mediates the ubiquitination of AURKB. Ubiquitination of AURKB by BCR(KLHL21) E3 ubiquitin ligase complex may not lead to its degradation by the proteasome. The polypeptide is Kelch-like protein 21 (KLHL21) (Homo sapiens (Human)).